The sequence spans 315 residues: Rhomboid-related protein 4 (315 aa).

Residues methionine 1–glutamine 21 are Cytoplasmic-facing. Residues isoleucine 22–phenylalanine 42 form a helical membrane-spanning segment. Residues leucine 43–tryptophan 103 lie on the Lumenal side of the membrane. Residues phenylalanine 104–phenylalanine 124 form a helical membrane-spanning segment. Topologically, residues threonine 125–arginine 137 are cytoplasmic. A helical membrane pass occupies residues asparagine 138–serine 154. The active-site Nucleophile is serine 144. Residues asparagine 155–leucine 180 are Lumenal-facing. Residues valine 181–valine 201 traverse the membrane as a helical segment. Residue histidine 195 is part of the active site. The Cytoplasmic portion of the chain corresponds to glycine 202–glutamine 315. Positions serine 269 to aspartate 284 are ubiquitin-binding domain (UBD). The interval proline 301–glutamine 315 is VCP/p97-interacting motif (VIM).

This sequence belongs to the peptidase S54 family. Interacts with BIK and STEAP3. Interacts (via C-terminal domain) with VCP/P97. Interacts with ubiquitin and ubiquitinated proteins. In terms of tissue distribution, expressed in testis (at protein level). Expressed in intestine, lung, brain, kidney, epididymis, stomach, muscle, spleen, liver, heart and testis.

Its subcellular location is the endoplasmic reticulum membrane. The protein resides in the mitochondrion membrane. It carries out the reaction Cleaves type-1 transmembrane domains using a catalytic dyad composed of serine and histidine that are contributed by different transmembrane domains.. With respect to regulation, inhibited by aprotinin. Functionally, intramembrane-cleaving serine protease that cleaves single transmembrane or multi-pass membrane proteins in the hydrophobic plane of the membrane, luminal loops and juxtamembrane regions. Involved in regulated intramembrane proteolysis and the subsequent release of functional polypeptides from their membrane anchors. Functional component of endoplasmic reticulum-associated degradation (ERAD) for misfolded membrane proteins. Required for the degradation process of some specific misfolded endoplasmic reticulum (ER) luminal proteins. Participates in the transfer of misfolded proteins from the ER to the cytosol, where they are destroyed by the proteasome in a ubiquitin-dependent manner. Functions in BIK, MPZ, PKD1, PTCRA, RHO, STEAP3 and TRAC processing. Involved in the regulation of exosomal secretion; inhibits the TSAP6-mediated secretion pathway. Involved in the regulation of apoptosis; modulates BIK-mediated apoptotic activity. Also plays a role in the regulation of spermatogenesis; inhibits apoptotic activity in spermatogonia. The polypeptide is Rhomboid-related protein 4 (Rhbdd1) (Mus musculus (Mouse)).